The chain runs to 272 residues: D-aminoacyl-tRNA deacylase (272 aa).

It belongs to the DtdA deacylase family. In terms of assembly, monomer. Zn(2+) serves as cofactor.

The catalysed reaction is a D-aminoacyl-tRNA + H2O = a tRNA + a D-alpha-amino acid + H(+). It carries out the reaction glycyl-tRNA(Ala) + H2O = tRNA(Ala) + glycine + H(+). Its function is as follows. D-aminoacyl-tRNA deacylase with broad substrate specificity. By recycling D-aminoacyl-tRNA to D-amino acids and free tRNA molecules, this enzyme counteracts the toxicity associated with the formation of D-aminoacyl-tRNA entities in vivo. In Desulfurococcus amylolyticus (strain DSM 18924 / JCM 16383 / VKM B-2413 / 1221n) (Desulfurococcus kamchatkensis), this protein is D-aminoacyl-tRNA deacylase.